The following is a 285-amino-acid chain: MTTTETGTRDPDALVRRAGKRADTRQDQHFLVDDRVLDRIPEYATDADIDLSHVLEIGAGPGALTDRLLATAERVTAVERDPDFAAHLREEFTEEVAADRLTIVEGDALEVDLPDFTASISNLPYGASSEIAFRLLPEQRPLLLMFQQEFAERMAADPATDDYGRLSVTAGHYADVEVVETVPPEAFDPQPRVTSALVRTMPRTPDYTVPSDDFFMDFLKAVFTQRRKTMRNAVRNTAHISGLGDPDAVVEAADEGLMSARAGKLTPADFATLATLAYEVGQPEA.

Residues His-29, Leu-31, Gly-58, Glu-79, Asp-107, and Asn-122 each contribute to the S-adenosyl-L-methionine site.

This sequence belongs to the class I-like SAM-binding methyltransferase superfamily. rRNA adenine N(6)-methyltransferase family. RsmA subfamily.

The protein resides in the cytoplasm. Specifically dimethylates two adjacent adenosines in the loop of a conserved hairpin near the 3'-end of 16S rRNA in the 30S particle. May play a critical role in biogenesis of 30S subunits. This is Probable ribosomal RNA small subunit methyltransferase A from Haloarcula marismortui (strain ATCC 43049 / DSM 3752 / JCM 8966 / VKM B-1809) (Halobacterium marismortui).